A 410-amino-acid chain; its full sequence is UBX domain-containing protein 3 (410 aa).

Disordered regions lie at residues 46–139 (EEDH…PDPK) and 154–212 (TISP…EKPL). Low complexity predominate over residues 65–85 (GSSSGISGGDQQPPRPLQRQQ). A compositionally biased stretch (polar residues) spans 86 to 97 (NTQGQGMKSGTA). Ser156, Ser167, and Ser186 each carry phosphoserine. Residues 163 to 174 (SGPSSLASSWAS) show a composition bias toward low complexity. Over residues 183–196 (NEASGSTTPVTQSG) the composition is skewed to polar residues. At Thr190 the chain carries Phosphothreonine. The SEP domain maps to 211-276 (PLRRTLYFWR…VQHRMDEDYV (66 aa)). One can recognise a UBX domain in the interval 334–410 (ENKPTTRIQV…KNASLVQKSL (77 aa)).

In terms of assembly, interacts with cdc48.

In terms of biological role, involved in CDC48-dependent protein degradation through the ubiquitin/proteasome pathway. Involved in delivery of substrates to the 26S proteasome. Also required for membrane fusion and sporulation. The protein is UBX domain-containing protein 3 (ubx3) of Schizosaccharomyces pombe (strain 972 / ATCC 24843) (Fission yeast).